The sequence spans 136 residues: Protein NrdI (136 aa).

Belongs to the NrdI family.

In terms of biological role, probably involved in ribonucleotide reductase function. The protein is Protein NrdI of Salmonella agona (strain SL483).